Reading from the N-terminus, the 280-residue chain is Bifunctional protein FolD (280 aa).

NADP(+)-binding positions include Gly164–Ser166, Ser189, and Val230.

Belongs to the tetrahydrofolate dehydrogenase/cyclohydrolase family. Homodimer.

It catalyses the reaction (6R)-5,10-methylene-5,6,7,8-tetrahydrofolate + NADP(+) = (6R)-5,10-methenyltetrahydrofolate + NADPH. The enzyme catalyses (6R)-5,10-methenyltetrahydrofolate + H2O = (6R)-10-formyltetrahydrofolate + H(+). It functions in the pathway one-carbon metabolism; tetrahydrofolate interconversion. In terms of biological role, catalyzes the oxidation of 5,10-methylenetetrahydrofolate to 5,10-methenyltetrahydrofolate and then the hydrolysis of 5,10-methenyltetrahydrofolate to 10-formyltetrahydrofolate. The protein is Bifunctional protein FolD of Geotalea daltonii (strain DSM 22248 / JCM 15807 / FRC-32) (Geobacter daltonii).